Here is a 1007-residue protein sequence, read N- to C-terminus: Probable beta-galactosidase A (1007 aa).

The signal sequence occupies residues 1–18 (MKLSSACAIALLAAQAAG). Substrate-binding residues include tyrosine 96, asparagine 140, alanine 141, and glutamate 142. An N-linked (GlcNAc...) asparagine glycan is attached at asparagine 156. Asparagine 199 provides a ligand contact to substrate. The Proton donor role is filled by glutamate 200. A disulfide bond links cysteine 205 and cysteine 206. Tyrosine 260 is a substrate binding site. An intrachain disulfide couples cysteine 266 to cysteine 315. Residue glutamate 298 is the Nucleophile of the active site. Tyrosine 364 provides a ligand contact to substrate. Residues asparagine 373, asparagine 402, asparagine 422, asparagine 478, asparagine 522, asparagine 622, asparagine 739, asparagine 760, asparagine 777, and asparagine 805 are each glycosylated (N-linked (GlcNAc...) asparagine). Residues 862-881 (RQGFHQPEPPSQDWKSSSPL) form a disordered region. Residue asparagine 914 is glycosylated (N-linked (GlcNAc...) asparagine).

This sequence belongs to the glycosyl hydrolase 35 family.

Its subcellular location is the secreted. It carries out the reaction Hydrolysis of terminal non-reducing beta-D-galactose residues in beta-D-galactosides.. Cleaves beta-linked terminal galactosyl residues from gangliosides, glycoproteins, and glycosaminoglycans. In Aspergillus phoenicis (Aspergillus saitoi), this protein is Probable beta-galactosidase A (lacA).